Reading from the N-terminus, the 340-residue chain is UDP-N-acetylenolpyruvoylglucosamine reductase (340 aa).

The 171-residue stretch at 11–181 folds into the FAD-binding PCMH-type domain; the sequence is ISVKAKKIIS…VAIGLKLKKK (171 aa). Residue Arg156 is part of the active site. Ser227 (proton donor) is an active-site residue. Glu323 is an active-site residue.

The protein belongs to the MurB family. Requires FAD as cofactor.

It is found in the cytoplasm. It carries out the reaction UDP-N-acetyl-alpha-D-muramate + NADP(+) = UDP-N-acetyl-3-O-(1-carboxyvinyl)-alpha-D-glucosamine + NADPH + H(+). It functions in the pathway cell wall biogenesis; peptidoglycan biosynthesis. In terms of biological role, cell wall formation. The chain is UDP-N-acetylenolpyruvoylglucosamine reductase from Wigglesworthia glossinidia brevipalpis.